A 154-amino-acid chain; its full sequence is uncharacterized protein (154 aa).

S47 is subject to Phosphoserine.

This sequence to yeast YPL229w.

This is an uncharacterized protein from Saccharomyces cerevisiae (strain ATCC 204508 / S288c) (Baker's yeast).